The chain runs to 631 residues: Phosphomethylpyrimidine synthase (631 aa).

Residues Asn231, Met260, Tyr289, His325, 345 to 347 (SRG), 386 to 389 (DGLR), and Glu425 each bind substrate. His429 serves as a coordination point for Zn(2+). Tyr452 serves as a coordination point for substrate. His493 contributes to the Zn(2+) binding site. 3 residues coordinate [4Fe-4S] cluster: Cys573, Cys576, and Cys581.

It belongs to the ThiC family. As to quaternary structure, homodimer. The cofactor is [4Fe-4S] cluster.

It catalyses the reaction 5-amino-1-(5-phospho-beta-D-ribosyl)imidazole + S-adenosyl-L-methionine = 4-amino-2-methyl-5-(phosphooxymethyl)pyrimidine + CO + 5'-deoxyadenosine + formate + L-methionine + 3 H(+). The protein operates within cofactor biosynthesis; thiamine diphosphate biosynthesis. Functionally, catalyzes the synthesis of the hydroxymethylpyrimidine phosphate (HMP-P) moiety of thiamine from aminoimidazole ribotide (AIR) in a radical S-adenosyl-L-methionine (SAM)-dependent reaction. The protein is Phosphomethylpyrimidine synthase of Acinetobacter baylyi (strain ATCC 33305 / BD413 / ADP1).